Here is a 1033-residue protein sequence, read N- to C-terminus: MMKSDEGVSGNSNNNNNYKFKDNTFRKYGVEVVAYDNNNNNNNNNNNNDDNNTVTVNSRGFHISIHPFSFRNKLTINQNNGSIGGSSSSSSTSNSVSTPKPQSFYVDDAGIAKQLNQSVFDILSRSRYLSSLSHENLAEFIAAEPSQKHHDQMLIVSEDYKNSLEKQIEIQAKRQTPIPSNTIGRYAYQILKALSYLHSQDLTHRSLSLDNIKLDDNNQIKLTNYGLYYLSDHGENVSFPIGNLLYLSPESILRGAKGSSNTKADVWALGCILLHICLGYCIWQDNNPSIVTNRILHLSGYSTTQSFNSISKSFEQCELKKTIINEKQHEEYEEYDDDEDISEEEKEKRIKDIKLNNRDNMNNFINSLKREEKENSDSNSGSSNSNIGIGLNGLGKELIEIIEQCLIPNPMDRPDSETLLDHPYFNEYKNIDPYQLQWIIKPFTKSWDLPDSLESLTLKEIESYGHIGSDNNGGGGGGGGESDSDIYSGKEIYYFWKLLGGNIEKELVNKGFAKASPSVHKLPLYVPVKASLTESTNSGLNSPQPYQHQHHQHQHQHQHPNIIKSKNSTVYNNEFCLVELSNVFLKIKESFKLYGSKVFEEGIEQSNNNNNNRFNNIENNIELQIIIIREFHKLLYQYQYDDPTLSQPKIYRLAKLFVPPILRGDIWSSILGVNEREAKQLYNSINLDVKGPNDKQFELDIPRCHQYHPLLSSRQGHVQLFKILKAWSLLNLEKGCYWQGLDNVASPFLVHHFFNEPIAFASLKAFVDKYLSILYVPNNHAALSEIMLIYQQLLAYHDPELLNHLMDIQLDPNLYSIPWFITVFAHILPIDKLEILWDSILLCPSSLPNFIAASMIIQFRDSILKMNFEDGITMMSMIPSVDVHKCVSDALSMFNKTPLSTTVTKFVSNTDQELWWMQEVPFEKRKLELFPRIDIHDLINDQQKVILDIRTPLQFQQIHYPSSINVNPKLSKLQQQMEQYKGQQIVVIAPKDQGVDFTNQLIQWKFPFVSMLNGGMDSLEHGAHSLLIISNKN.

3 disordered regions span residues 1–21, 35–55, and 81–101; these read MMKS…YKFK, YDNN…NTVT, and GSIG…TPKP. 2 stretches are compositionally biased toward low complexity: residues 36–52 and 81–97; these read DNNN…DDNN and GSIG…NSVS. The 354-residue stretch at 72-425 folds into the Protein kinase domain; it reads NKLTINQNNG…SETLLDHPYF (354 aa). ATP-binding positions include 78–86 and Lys-113; that span reads QNNGSIGGS. The span at 535–546 shows a compositional bias: polar residues; the sequence is STNSGLNSPQPY. The disordered stretch occupies residues 535-560; the sequence is STNSGLNSPQPYQHQHHQHQHQHQHP. A compositionally biased stretch (basic residues) spans 548–558; that stretch reads HQHHQHQHQHQ. In terms of domain architecture, Rab-GAP TBC spans 657–844; sequence FVPPILRGDI…ILWDSILLCP (188 aa).

Belongs to the protein kinase superfamily. Ser/Thr protein kinase family.

In Dictyostelium discoideum (Social amoeba), this protein is TBC domain-containing protein kinase-like protein (tbck).